The primary structure comprises 47 residues: Exoenzymes regulatory protein AepH (47 aa).

Basic and acidic residues-rich tracts occupy residues 1-17 and 33-47; these read MGQE…QDGH and TKKE…DANV. Residues 1–47 form a disordered region; the sequence is MGQEPKGIESRKIQDGHVRKKVGRQQGLWVRTTKKEKFSRMSRDANV.

In terms of biological role, involved in the control of extracellular enzymes production. Stimulates PEL, PEH, CEL, and PRT production. The sequence is that of Exoenzymes regulatory protein AepH (aepH) from Pectobacterium carotovorum subsp. carotovorum (Erwinia carotovora subsp. carotovora).